We begin with the raw amino-acid sequence, 434 residues long: Glutamine synthetase leaf isozyme, chloroplastic (434 aa).

2 disordered regions span residues 1–33 (MQVR…ARQP) and 101–126 (TISK…GQAP). The N-terminal 54 residues, 1–54 (MQVRRDDDGAGGCAGDAVPGGGEGQDGVPARQPAGRVWGVSRAARATSGFKVLA), are a transit peptide targeting the chloroplast. Residues 10–25 (AGGCAGDAVPGGGEGQ) show a composition bias toward gly residues. The GS beta-grasp domain occupies 81-161 (IIAEYIWVGG…VICDTYTPQG (81 aa)). A GS catalytic domain is found at 168 to 434 (KRHMAAQIFS…LAAKKLALKV (267 aa)).

It belongs to the glutamine synthetase family. As to quaternary structure, homooctamer.

It localises to the plastid. Its subcellular location is the chloroplast. It catalyses the reaction L-glutamate + NH4(+) + ATP = L-glutamine + ADP + phosphate + H(+). The light-modulated chloroplast enzyme, encoded by a nuclear gene and expressed primarily in leaves, is responsible for the reassimilation of the ammonia generated by photorespiration. The protein is Glutamine synthetase leaf isozyme, chloroplastic of Hordeum vulgare (Barley).